The primary structure comprises 375 residues: DNA replication and repair protein RecF (375 aa).

Residue 30–37 (GDNAQGKS) coordinates ATP.

This sequence belongs to the RecF family.

The protein localises to the cytoplasm. Its function is as follows. The RecF protein is involved in DNA metabolism; it is required for DNA replication and normal SOS inducibility. RecF binds preferentially to single-stranded, linear DNA. It also seems to bind ATP. This is DNA replication and repair protein RecF from Gloeobacter violaceus (strain ATCC 29082 / PCC 7421).